The chain runs to 517 residues: BTB/POZ domain-containing protein At3g49900 (517 aa).

A compositionally biased stretch (low complexity) spans 28–37 (SSSSSSLSLS). Residues 28–49 (SSSSSSLSLSPKQPINLSSSPS) form a disordered region. Polar residues predominate over residues 38 to 49 (PKQPINLSSSPS). The 64-residue stretch at 67 to 130 (PDVFVNVGGT…CYGAHIELTP (64 aa)) folds into the BTB domain. The 84-residue stretch at 224–307 (LPAGDFNVVA…VRAMLQEQLN (84 aa)) folds into the NPH3 domain. Residues 409–456 (ARSASFHCVHQPSNVNKTQRGDRGSVSNLSTTYRRRRASPPQAQPQKS) form a disordered region.

Belongs to the NPH3 family.

Its pathway is protein modification; protein ubiquitination. In terms of biological role, may act as a substrate-specific adapter of an E3 ubiquitin-protein ligase complex (CUL3-RBX1-BTB) which mediates the ubiquitination and subsequent proteasomal degradation of target proteins. The protein is BTB/POZ domain-containing protein At3g49900 of Arabidopsis thaliana (Mouse-ear cress).